The sequence spans 591 residues: Tricyclene synthase, chloroplastic (591 aa).

Residues 1–45 (MATLLQIGSGVIYSNALRKTLRRPQSSTCIIVTETTPCNKSPTVQ) constitute a chloroplast transit peptide. Residues Arg-302, Asp-339, Asp-343, Arg-481, and Asn-484 each contribute to the (2E)-geranyl diphosphate site. Mg(2+) is bound by residues Asp-339 and Asp-343. Positions 339–343 (DDIYD) match the DDXXD motif motif. Positions 484, 488, and 492 each coordinate Mg(2+).

Belongs to the terpene synthase family. Tpsb subfamily. Mg(2+) is required as a cofactor. The cofactor is Mn(2+). As to expression, predominantly expressed in flowers but also in leaves, siliques and in stems.

The protein resides in the plastid. Its subcellular location is the chloroplast stroma. The enzyme catalyses (2E)-geranyl diphosphate = beta-myrcene + diphosphate. It catalyses the reaction (2E)-geranyl diphosphate = tricyclene + diphosphate. The catalysed reaction is (2E)-geranyl diphosphate = (E)-beta-ocimene + diphosphate. It functions in the pathway secondary metabolite biosynthesis; terpenoid biosynthesis. In terms of biological role, involved in monoterpene (C10) biosynthesis. The major product is beta-myrcene (56%) followed by (E)-beta-ocimene (20%) and minor amounts (less than 5%) of the cyclic monoterpene (-)-limonene, (+)-limonene, 2-carene and tricyclene. The sequence is that of Tricyclene synthase, chloroplastic from Arabidopsis thaliana (Mouse-ear cress).